Consider the following 92-residue polypeptide: Small ribosomal subunit protein uS19 (92 aa).

The protein belongs to the universal ribosomal protein uS19 family.

Protein S19 forms a complex with S13 that binds strongly to the 16S ribosomal RNA. The protein is Small ribosomal subunit protein uS19 of Neisseria gonorrhoeae (strain ATCC 700825 / FA 1090).